A 673-amino-acid polypeptide reads, in one-letter code: DNA ligase (673 aa).

NAD(+)-binding positions include Asp-33 to Asp-37, Ser-82 to Leu-83, and Glu-113. Lys-115 functions as the N6-AMP-lysine intermediate in the catalytic mechanism. 4 residues coordinate NAD(+): Arg-136, Glu-170, Lys-285, and Lys-309. 4 residues coordinate Zn(2+): Cys-403, Cys-406, Cys-421, and Cys-426. The region spanning Ala-583 to Met-672 is the BRCT domain.

Belongs to the NAD-dependent DNA ligase family. LigA subfamily. Mg(2+) is required as a cofactor. Requires Mn(2+) as cofactor.

The enzyme catalyses NAD(+) + (deoxyribonucleotide)n-3'-hydroxyl + 5'-phospho-(deoxyribonucleotide)m = (deoxyribonucleotide)n+m + AMP + beta-nicotinamide D-nucleotide.. Its function is as follows. DNA ligase that catalyzes the formation of phosphodiester linkages between 5'-phosphoryl and 3'-hydroxyl groups in double-stranded DNA using NAD as a coenzyme and as the energy source for the reaction. It is essential for DNA replication and repair of damaged DNA. The sequence is that of DNA ligase from Caldicellulosiruptor bescii (strain ATCC BAA-1888 / DSM 6725 / KCTC 15123 / Z-1320) (Anaerocellum thermophilum).